The chain runs to 412 residues: Probable serine/threonine-protein kinase PBL10 (412 aa).

The N-myristoyl glycine moiety is linked to residue Gly2. A lipid anchor (S-palmitoyl cysteine) is attached at Cys4. Positions Gly15 to Glu45 are disordered. The span at Ser23 to Arg43 shows a compositional bias: polar residues. Phosphothreonine is present on Thr58. Positions Phe69–Thr356 constitute a Protein kinase domain. ATP contacts are provided by residues Leu75–Val83 and Lys107. Tyr152 is modified (phosphotyrosine). The active-site Proton acceptor is the Asp204. Phosphoserine occurs at positions 208 and 238. Residues Thr239 and Thr244 each carry the phosphothreonine modification. Residue Tyr252 is modified to Phosphotyrosine.

It belongs to the protein kinase superfamily. Ser/Thr protein kinase family. In terms of assembly, interacts with the Xanthomonas campestris effector XopAC/AvrAC. Expressed in stomatal guard cells of leaves.

The protein resides in the cell membrane. The enzyme catalyses L-seryl-[protein] + ATP = O-phospho-L-seryl-[protein] + ADP + H(+). It carries out the reaction L-threonyl-[protein] + ATP = O-phospho-L-threonyl-[protein] + ADP + H(+). In terms of biological role, possible bi-functional kinase. In vitro, it exhibits serine/threonine activity. In vivo, can phosphorylate tyrosine residues of limited substrates. May be involved in plant defense signaling. Required for full light-induced stomatal opening. The sequence is that of Probable serine/threonine-protein kinase PBL10 from Arabidopsis thaliana (Mouse-ear cress).